The sequence spans 447 residues: Elongation factor 1-alpha (447 aa).

One can recognise a tr-type G domain in the interval 5 to 230; sequence KIHISIVVIG…DQINEPKRPS (226 aa). Positions 14 to 21 are G1; sequence GHVDSGKS. 14–21 is a binding site for GTP; that stretch reads GHVDSGKS. Position 55 is an N6,N6-dimethyllysine (K55). The G2 stretch occupies residues 70 to 74; that stretch reads GITID. The residue at position 79 (K79) is an N6,N6,N6-trimethyllysine. The tract at residues 91–94 is G3; sequence DAPG. GTP-binding positions include 91–95 and 153–156; these read DAPGH and NKMD. Residues 153–156 are G4; it reads NKMD. The residue at position 187 (K187) is an N6,N6,N6-trimethyllysine. The G5 stretch occupies residues 194-196; sequence SGF. K261 bears the N6-methyllysine mark. E289 is modified (5-glutamyl glycerylphosphorylethanolamine). N6,N6,N6-trimethyllysine is present on K306. The residue at position 362 (E362) is a 5-glutamyl glycerylphosphorylethanolamine. K396 bears the N6,N6,N6-trimethyllysine mark.

Belongs to the TRAFAC class translation factor GTPase superfamily. Classic translation factor GTPase family. EF-Tu/EF-1A subfamily.

The protein resides in the cytoplasm. Its function is as follows. This protein promotes the GTP-dependent binding of aminoacyl-tRNA to the A-site of ribosomes during protein biosynthesis. The protein is Elongation factor 1-alpha (BLT63) of Hordeum vulgare (Barley).